The sequence spans 221 residues: Translation initiation factor 6 (221 aa).

It belongs to the eIF-6 family.

In terms of biological role, binds to the 50S ribosomal subunit and prevents its association with the 30S ribosomal subunit to form the 70S initiation complex. The chain is Translation initiation factor 6 from Natronomonas pharaonis (strain ATCC 35678 / DSM 2160 / CIP 103997 / JCM 8858 / NBRC 14720 / NCIMB 2260 / Gabara) (Halobacterium pharaonis).